Reading from the N-terminus, the 119-residue chain is Iron-sulfur cluster insertion protein ErpA (119 aa).

3 residues coordinate iron-sulfur cluster: Cys47, Cys111, and Cys113.

It belongs to the HesB/IscA family. As to quaternary structure, homodimer. Iron-sulfur cluster is required as a cofactor.

Its function is as follows. Required for insertion of 4Fe-4S clusters for at least IspG. The sequence is that of Iron-sulfur cluster insertion protein ErpA from Alcanivorax borkumensis (strain ATCC 700651 / DSM 11573 / NCIMB 13689 / SK2).